A 325-amino-acid chain; its full sequence is NADH-quinone oxidoreductase subunit H (325 aa).

The next 9 helical transmembrane spans lie at isoleucine 11 to phenylalanine 31, asparagine 50 to phenylalanine 69, valine 81 to valine 101, isoleucine 114 to glycine 134, leucine 154 to phenylalanine 174, isoleucine 186 to valine 206, phenylalanine 237 to phenylalanine 257, leucine 265 to isoleucine 285, and valine 304 to alanine 324.

This sequence belongs to the complex I subunit 1 family. In terms of assembly, NDH-1 is composed of 13 different subunits. Subunits NuoA, H, J, K, L, M, N constitute the membrane sector of the complex.

It localises to the cell inner membrane. It catalyses the reaction a quinone + NADH + 5 H(+)(in) = a quinol + NAD(+) + 4 H(+)(out). Its function is as follows. NDH-1 shuttles electrons from NADH, via FMN and iron-sulfur (Fe-S) centers, to quinones in the respiratory chain. The immediate electron acceptor for the enzyme in this species is believed to be ubiquinone. Couples the redox reaction to proton translocation (for every two electrons transferred, four hydrogen ions are translocated across the cytoplasmic membrane), and thus conserves the redox energy in a proton gradient. This subunit may bind ubiquinone. The polypeptide is NADH-quinone oxidoreductase subunit H (Citrobacter koseri (strain ATCC BAA-895 / CDC 4225-83 / SGSC4696)).